The chain runs to 378 residues: Small ribosomal subunit protein bS1 (378 aa).

S1 motif domains follow at residues 1-66 (ETVT…VSRR), 87-155 (GMEV…LGLK), 172-242 (GTKL…LGLK), 259-329 (GDRV…LGVK), and 346-378 (GAIV…ASEA).

This sequence belongs to the bacterial ribosomal protein bS1 family.

Functionally, binds mRNA; thus facilitating recognition of the initiation point. It is needed to translate mRNA with a short Shine-Dalgarno (SD) purine-rich sequence. In Providencia sp, this protein is Small ribosomal subunit protein bS1 (rpsA).